Reading from the N-terminus, the 184-residue chain is Copper transporter 6 (184 aa).

Residues 1–25 are compositionally biased toward low complexity; the sequence is MRGMGDDGMGPMAMAPPRSGHATAA. A disordered region spans residues 1-27; sequence MRGMGDDGMGPMAMAPPRSGHATAAAP. 2 helical membrane-spanning segments follow: residues 64–84 and 124–144; these read YALC…LSVL and MAYL…LAAV.

The protein belongs to the copper transporter (Ctr) (TC 1.A.56) family. SLC31A subfamily.

Its subcellular location is the membrane. Involved in the transport of copper. This Oryza sativa subsp. japonica (Rice) protein is Copper transporter 6 (COPT6).